The chain runs to 404 residues: Cysteine desulfurase IscS (404 aa).

Pyridoxal 5'-phosphate-binding positions include Ala-75–Thr-76, Asn-155, Gln-183, and Ser-203–His-205. Lys-206 is subject to N6-(pyridoxal phosphate)lysine. Residue Thr-243 participates in pyridoxal 5'-phosphate binding. Residue Cys-328 is the Cysteine persulfide intermediate of the active site. Residue Cys-328 participates in [2Fe-2S] cluster binding.

Belongs to the class-V pyridoxal-phosphate-dependent aminotransferase family. NifS/IscS subfamily. In terms of assembly, homodimer. Forms a heterotetramer with IscU, interacts with other sulfur acceptors. Pyridoxal 5'-phosphate is required as a cofactor.

The protein localises to the cytoplasm. It carries out the reaction (sulfur carrier)-H + L-cysteine = (sulfur carrier)-SH + L-alanine. Its pathway is cofactor biosynthesis; iron-sulfur cluster biosynthesis. Master enzyme that delivers sulfur to a number of partners involved in Fe-S cluster assembly, tRNA modification or cofactor biosynthesis. Catalyzes the removal of elemental sulfur and selenium atoms from cysteine and selenocysteine to produce alanine. Functions as a sulfur delivery protein for Fe-S cluster synthesis onto IscU, an Fe-S scaffold assembly protein, as well as other S acceptor proteins. Also functions as a selenium delivery protein in the pathway for the biosynthesis of selenophosphate. The protein is Cysteine desulfurase IscS of Salmonella paratyphi C (strain RKS4594).